The sequence spans 153 residues: MMASKRVAKELESLSKELPPYLRQLSSDDANVLVWHMLLLPDQLPYGLKAFQVRIDFPREYPFKPPTLRFTTKIYHPNVREDGLVCLPLISNENWKPYTKPYQVLEALNVLVSKPNLEEPVRLELADLLTQNPEMFRKKAEEFTLKFGVDRPS.

In terms of domain architecture, UBC core spans Met-2–Val-149. Cys-86 functions as the Glycyl thioester intermediate in the catalytic mechanism.

The protein belongs to the ubiquitin-conjugating enzyme family. Interacts with RNF19A, RNF19B and RNF144B. Interacts with FLT3 (tyrosine phosphorylated). Post-translationally, ISGylated.

It carries out the reaction S-ubiquitinyl-[E1 ubiquitin-activating enzyme]-L-cysteine + [E2 ubiquitin-conjugating enzyme]-L-cysteine = [E1 ubiquitin-activating enzyme]-L-cysteine + S-ubiquitinyl-[E2 ubiquitin-conjugating enzyme]-L-cysteine.. It participates in protein modification; protein ubiquitination. Its function is as follows. Catalyzes the covalent attachment of ubiquitin or ISG15 to other proteins. Functions in the E6/E6-AP-induced ubiquitination of p53/TP53. Promotes ubiquitination and subsequent proteasomal degradation of FLT3. The chain is Ubiquitin/ISG15-conjugating enzyme E2 L6 (Ube2l6) from Mus musculus (Mouse).